Consider the following 618-residue polypeptide: Beta-glucosidase C (618 aa).

Residues 1–19 form the signal peptide; sequence MRVDSTVLALVALATDCLG. Asn40, Asn82, Asn104, Asn211, and Asn263 each carry an N-linked (GlcNAc...) asparagine glycan. The active site involves Asp330. N-linked (GlcNAc...) asparagine glycans are attached at residues Asn417, Asn448, Asn477, Asn482, Asn502, and Asn517.

It belongs to the glycosyl hydrolase 3 family.

The protein resides in the secreted. The enzyme catalyses Hydrolysis of terminal, non-reducing beta-D-glucosyl residues with release of beta-D-glucose.. Its pathway is glycan metabolism; cellulose degradation. In terms of biological role, beta-glucosidases are one of a number of cellulolytic enzymes involved in the degradation of cellulosic biomass. Catalyzes the last step releasing glucose from the inhibitory cellobiose. The sequence is that of Beta-glucosidase C (bglC) from Emericella nidulans (strain FGSC A4 / ATCC 38163 / CBS 112.46 / NRRL 194 / M139) (Aspergillus nidulans).